Here is a 469-residue protein sequence, read N- to C-terminus: Putative arginine/ornithine antiporter (469 aa).

Helical transmembrane passes span 8–28, 44–64, 90–110, 144–164, 179–199, 213–233, 254–274, 301–321, 347–367, 375–395, 417–437, and 439–459; these read GFWL…IFSL, AWLL…HLSI, AGFT…VAII, LTFA…VASI, VLGF…SLFG, IGIG…FVGI, ITGL…TMGV, VIMA…WILL, SPVI…FSVI, FTFL…VSAI, DGLI…TGTA, and LTTF…YPFV.

The protein belongs to the amino acid-polyamine-organocation (APC) superfamily. Basic amino acid/polyamine antiporter (APA) (TC 2.A.3.2) family.

The protein localises to the cell membrane. It catalyses the reaction L-ornithine(in) + L-arginine(out) = L-ornithine(out) + L-arginine(in). Functionally, catalyzes electroneutral exchange between L-arginine and L-ornithine. This Bacillus subtilis (strain 168) protein is Putative arginine/ornithine antiporter (yvsH).